The primary structure comprises 377 residues: RIB43A-like with coiled-coils protein 2 (377 aa).

Residues 188-238 (ELKFDEAARDLQRLEITTRKAVCAAVKEFNKKQVVELAERKRQVKQQEQED) are a coiled coil. Residues 355 to 377 (QLDAAPSSQPTEDYFSQFNTRSR) form a disordered region. Residues 360–377 (PSSQPTEDYFSQFNTRSR) show a composition bias toward polar residues.

The protein belongs to the RIB43A family. Microtubule inner protein component of sperm flagellar doublet microtubules.

Its subcellular location is the cytoplasm. The protein resides in the cytoskeleton. The protein localises to the cilium axoneme. It localises to the flagellum axoneme. Its function is as follows. Microtubule inner protein (MIP) part of the dynein-decorated doublet microtubules (DMTs) in cilia axoneme, which is required for motile cilia beating. This chain is RIB43A-like with coiled-coils protein 2, found in Rattus norvegicus (Rat).